Here is a 160-residue protein sequence, read N- to C-terminus: Regulatory protein RecX (160 aa).

This sequence belongs to the RecX family.

It localises to the cytoplasm. Modulates RecA activity. This chain is Regulatory protein RecX, found in Pelodictyon phaeoclathratiforme (strain DSM 5477 / BU-1).